Consider the following 189-residue polypeptide: uncharacterized protein (189 aa).

This sequence belongs to the inositol monophosphatase superfamily.

This is an uncharacterized protein from Leptospira biflexa.